A 258-amino-acid polypeptide reads, in one-letter code: Type III pantothenate kinase (258 aa).

Position 6-13 (6-13 (DVGNTNTV)) interacts with ATP. Residues tyrosine 100 and 107-110 (GADR) each bind substrate. The active-site Proton acceptor is the aspartate 109. Residue aspartate 129 coordinates K(+). Residue threonine 132 coordinates ATP. Threonine 184 serves as a coordination point for substrate.

This sequence belongs to the type III pantothenate kinase family. Homodimer. NH4(+) serves as cofactor. Requires K(+) as cofactor.

The protein resides in the cytoplasm. The enzyme catalyses (R)-pantothenate + ATP = (R)-4'-phosphopantothenate + ADP + H(+). Its pathway is cofactor biosynthesis; coenzyme A biosynthesis; CoA from (R)-pantothenate: step 1/5. Its function is as follows. Catalyzes the phosphorylation of pantothenate (Pan), the first step in CoA biosynthesis. The polypeptide is Type III pantothenate kinase (Bacillus velezensis (strain DSM 23117 / BGSC 10A6 / LMG 26770 / FZB42) (Bacillus amyloliquefaciens subsp. plantarum)).